We begin with the raw amino-acid sequence, 457 residues long: UDP-glycosyltransferase 708C2 (457 aa).

Catalysis depends on His32, which acts as the Proton acceptor. Position 32 (His32) interacts with an anthocyanidin. The Charge relay role is filled by Asp129. Position 150 (Thr150) interacts with UDP-alpha-D-glucose. The segment at 279–280 is UDP; sequence NR. The UDP-alpha-D-glucose site is built by Val341, Gln343, His358, Trp361, Asn362, Ser363, and Glu366. Residue Gly381 coordinates an anthocyanidin. UDP-alpha-D-glucose contacts are provided by Asp382 and Gln383.

This sequence belongs to the UDP-glycosyltransferase family. As to expression, expressed in cotyledons. Not detected in flowers, leaves, roots and hypocotyls.

It carries out the reaction a 3'-hydro-2'-hydroxy-beta-oxodihydrochalcone + UDP-alpha-D-glucose = a 3'-(beta-D-glucopyranosyl)-2'-hydroxy-beta-oxodihydrochalcone + UDP + H(+). Its function is as follows. UDP-glucose-dependent glucosyltransferase catalyzing the c-glucosylation of 2-hydroxyflavanones (2-hydroxynaringenin, 2-hydroxyeriodictyol and 2-hydroxypinocembrin) and phloretin. No activity with flavanones, flavones or flavonols. The sequence is that of UDP-glycosyltransferase 708C2 from Fagopyrum esculentum (Common buckwheat).